Consider the following 96-residue polypeptide: Small ribosomal subunit protein bS6 (96 aa).

This sequence belongs to the bacterial ribosomal protein bS6 family.

Functionally, binds together with bS18 to 16S ribosomal RNA. The chain is Small ribosomal subunit protein bS6 from Synechococcus sp. (strain JA-2-3B'a(2-13)) (Cyanobacteria bacterium Yellowstone B-Prime).